We begin with the raw amino-acid sequence, 113 residues long: Nucleoid-associated protein Cthe_2143 (113 aa).

The protein belongs to the YbaB/EbfC family. In terms of assembly, homodimer.

The protein resides in the cytoplasm. The protein localises to the nucleoid. Binds to DNA and alters its conformation. May be involved in regulation of gene expression, nucleoid organization and DNA protection. This chain is Nucleoid-associated protein Cthe_2143, found in Acetivibrio thermocellus (strain ATCC 27405 / DSM 1237 / JCM 9322 / NBRC 103400 / NCIMB 10682 / NRRL B-4536 / VPI 7372) (Clostridium thermocellum).